A 277-amino-acid chain; its full sequence is Bis(5'-nucleosyl)-tetraphosphatase, symmetrical (277 aa).

Belongs to the Ap4A hydrolase family.

It catalyses the reaction P(1),P(4)-bis(5'-adenosyl) tetraphosphate + H2O = 2 ADP + 2 H(+). Its function is as follows. Hydrolyzes diadenosine 5',5'''-P1,P4-tetraphosphate to yield ADP. This chain is Bis(5'-nucleosyl)-tetraphosphatase, symmetrical, found in Bordetella pertussis (strain Tohama I / ATCC BAA-589 / NCTC 13251).